Consider the following 46-residue polypeptide: Esculentin-1GRa (46 aa).

Expressed by the skin glands.

Its subcellular location is the secreted. Functionally, antimicrobial peptide active against the Gram-positive bacterium S.aureus (MIC=12.5 uM) and against the Gram-negative bacterium E.coli (MIC=6 uM). Has no antifungal activity against C.albicans. Shows hemolytic activity against human erythrocytes only at high concentrations (LC(50)=210 uM). In Odorrana grahami (Yunnanfu frog), this protein is Esculentin-1GRa.